The primary structure comprises 622 residues: Chaperone protein HscA homolog (622 aa).

The protein belongs to the heat shock protein 70 family.

Functionally, chaperone involved in the maturation of iron-sulfur cluster-containing proteins. Has a low intrinsic ATPase activity which is markedly stimulated by HscB. The chain is Chaperone protein HscA homolog from Burkholderia pseudomallei (strain K96243).